The sequence spans 229 residues: DNA mismatch repair protein MutH (229 aa).

The protein belongs to the MutH family.

It localises to the cytoplasm. Its function is as follows. Sequence-specific endonuclease that cleaves unmethylated GATC sequences. It is involved in DNA mismatch repair. The polypeptide is DNA mismatch repair protein MutH (Escherichia coli O6:K15:H31 (strain 536 / UPEC)).